The primary structure comprises 319 residues: Acetyl-coenzyme A carboxylase carboxyl transferase subunit alpha (319 aa).

The 262-residue stretch at 35-296 (NLDEEVQRLR…KAQLLIDLAE (262 aa)) folds into the CoA carboxyltransferase C-terminal domain.

This sequence belongs to the AccA family. As to quaternary structure, acetyl-CoA carboxylase is a heterohexamer composed of biotin carboxyl carrier protein (AccB), biotin carboxylase (AccC) and two subunits each of ACCase subunit alpha (AccA) and ACCase subunit beta (AccD).

The protein resides in the cytoplasm. The enzyme catalyses N(6)-carboxybiotinyl-L-lysyl-[protein] + acetyl-CoA = N(6)-biotinyl-L-lysyl-[protein] + malonyl-CoA. It functions in the pathway lipid metabolism; malonyl-CoA biosynthesis; malonyl-CoA from acetyl-CoA: step 1/1. Component of the acetyl coenzyme A carboxylase (ACC) complex. First, biotin carboxylase catalyzes the carboxylation of biotin on its carrier protein (BCCP) and then the CO(2) group is transferred by the carboxyltransferase to acetyl-CoA to form malonyl-CoA. The sequence is that of Acetyl-coenzyme A carboxylase carboxyl transferase subunit alpha from Photorhabdus laumondii subsp. laumondii (strain DSM 15139 / CIP 105565 / TT01) (Photorhabdus luminescens subsp. laumondii).